The chain runs to 366 residues: Anhydro-N-acetylmuramic acid kinase (366 aa).

12–19 (GTSMDGAD) is an ATP binding site.

Belongs to the anhydro-N-acetylmuramic acid kinase family.

The catalysed reaction is 1,6-anhydro-N-acetyl-beta-muramate + ATP + H2O = N-acetyl-D-muramate 6-phosphate + ADP + H(+). The protein operates within amino-sugar metabolism; 1,6-anhydro-N-acetylmuramate degradation. It functions in the pathway cell wall biogenesis; peptidoglycan recycling. In terms of biological role, catalyzes the specific phosphorylation of 1,6-anhydro-N-acetylmuramic acid (anhMurNAc) with the simultaneous cleavage of the 1,6-anhydro ring, generating MurNAc-6-P. Is required for the utilization of anhMurNAc either imported from the medium or derived from its own cell wall murein, and thus plays a role in cell wall recycling. The polypeptide is Anhydro-N-acetylmuramic acid kinase (Neisseria meningitidis serogroup C (strain 053442)).